The sequence spans 219 residues: Large ribosomal subunit protein uL3 (219 aa).

A disordered region spans residues 124–154 (FSGSIKRHNQSEGPKSHGSRYHRRPGSMGPI).

It belongs to the universal ribosomal protein uL3 family. Part of the 50S ribosomal subunit. Forms a cluster with proteins L14 and L19.

Its function is as follows. One of the primary rRNA binding proteins, it binds directly near the 3'-end of the 23S rRNA, where it nucleates assembly of the 50S subunit. The sequence is that of Large ribosomal subunit protein uL3 from Phytoplasma mali (strain AT).